We begin with the raw amino-acid sequence, 151 residues long: Large ribosomal subunit protein uL13 (151 aa).

The interval 126-151 is disordered; it reads YPGSNHPHEAQKPEKLTIQTIPGGER. Positions 131–140 are enriched in basic and acidic residues; sequence HPHEAQKPEK.

The protein belongs to the universal ribosomal protein uL13 family. As to quaternary structure, part of the 50S ribosomal subunit.

Its function is as follows. This protein is one of the early assembly proteins of the 50S ribosomal subunit, although it is not seen to bind rRNA by itself. It is important during the early stages of 50S assembly. The polypeptide is Large ribosomal subunit protein uL13 (Trichodesmium erythraeum (strain IMS101)).